The following is a 1009-amino-acid chain: Mediator of RNA polymerase II transcription subunit 5 (1009 aa).

This sequence belongs to the Mediator complex subunit 5 family. Component of the Mediator complex.

It localises to the nucleus. In terms of biological role, component of the Mediator complex, a coactivator involved in the regulated transcription of nearly all RNA polymerase II-dependent genes. Mediator functions as a bridge to convey information from gene-specific regulatory proteins to the basal RNA polymerase II transcription machinery. Mediator is recruited to promoters by direct interactions with regulatory proteins and serves as a scaffold for the assembly of a functional preinitiation complex with RNA polymerase II and the general transcription factors. This is Mediator of RNA polymerase II transcription subunit 5 (nut1) from Neosartorya fischeri (strain ATCC 1020 / DSM 3700 / CBS 544.65 / FGSC A1164 / JCM 1740 / NRRL 181 / WB 181) (Aspergillus fischerianus).